The following is a 557-amino-acid chain: Low affinity inorganic phosphate transporter 8 (557 aa).

Over 1–20 (MATSHGVLRSLDNAKTQSYH) the chain is Cytoplasmic. A helical membrane pass occupies residues 21 to 41 (YLAIVIAGMGFFTDAYDLFCI). Residues 42–70 (TAVTKLIGRLYYSDPTNHSPGILPTNVNN) lie on the Extracellular side of the membrane. Residues 71–91 (AITGVALCGTLAGQLFFGWLG) traverse the membrane as a helical segment. Residues 92–98 (DKLGRKK) are Cytoplasmic-facing. Residues 99-119 (VYGITLTTMVGFALLSGLSFG) traverse the membrane as a helical segment. Over 120–130 (STPKTVVTSLC) the chain is Extracellular. The chain crosses the membrane as a helical span at residues 131–151 (FFRFWLGFGIGGDYPLSAVIM). The Cytoplasmic segment spans residues 152 to 162 (SEYANQKTRGS). Residues 163-183 (FIAAVFAMQGVGILVAGGVAM) form a helical membrane-spanning segment. Topologically, residues 184–210 (FVSKLFLLYFPAPDFETDAVLSTQPEG) are extracellular. A helical transmembrane segment spans residues 211–231 (DFVWRIVLMFGAVPAALTYYW). The Cytoplasmic portion of the chain corresponds to 232 to 294 (RMKMPETARY…LFSSEFLNRH (63 aa)). Residues 295 to 315 (GLHLLGTTSTWFLLDIAFYSL) traverse the membrane as a helical segment. Topologically, residues 316-346 (QLTQKDIYPTSGLVYKASKMNAIEEVFQLSR) are extracellular. The chain crosses the membrane as a helical span at residues 347 to 367 (AMFAVALIATVPGYWCTVFLI). Residues 368–369 (EK) are Cytoplasmic-facing. The chain crosses the membrane as a helical span at residues 370 to 390 (IGRFRIQLIGFLVMSVCMWFL). The Extracellular segment spans residues 391 to 414 (GHNYRSFRGEESACKNGSKYSFCN). N-linked (GlcNAc...) asparagine glycosylation occurs at asparagine 406. The chain crosses the membrane as a helical span at residues 415 to 435 (GNPVMFAILFGLTLFFANFGP). The Cytoplasmic segment spans residues 436 to 457 (NSTTFIVPAELFPARLRSTCHG). The chain crosses the membrane as a helical span at residues 458-478 (ISAAAGKSGAIVGAFGVQSYI). Residues 479–490 (GNSHDKSKGTKQ) lie on the Extracellular side of the membrane. Residues 491-511 (AIMALAVVNLLGFFFTFLVPE) traverse the membrane as a helical segment. The Cytoplasmic portion of the chain corresponds to 512–557 (TQGRSLEEISGEEKDFQGNNADEEISGERNGTRNASVDKSPETSMV). A disordered region spans residues 519–557 (EISGEEKDFQGNNADEEISGERNGTRNASVDKSPETSMV). Positions 543 to 557 (TRNASVDKSPETSMV) are enriched in polar residues.

This sequence belongs to the major facilitator superfamily. Phosphate:H(+) symporter (TC 2.A.1.9) family.

The protein resides in the cell membrane. The catalysed reaction is phosphate(in) + H(+)(in) = phosphate(out) + H(+)(out). Low-affinity transporter for external inorganic phosphate (Pi) that may be involved in the acquisition of phosphate released by arbuscular mycorrhizal (AM) fungi (e.g. Glomus versiforme and G.intraradices) during AM symbiosis; not required for mycorrhizal arbuscule development. This Medicago truncatula (Barrel medic) protein is Low affinity inorganic phosphate transporter 8.